An 85-amino-acid polypeptide reads, in one-letter code: Small ribosomal subunit protein bS20 (85 aa).

Belongs to the bacterial ribosomal protein bS20 family.

Functionally, binds directly to 16S ribosomal RNA. This Borrelia turicatae (strain 91E135) protein is Small ribosomal subunit protein bS20.